The following is a 263-amino-acid chain: Triosephosphate isomerase (263 aa).

10-12 (NWK) serves as a coordination point for substrate. His104 functions as the Electrophile in the catalytic mechanism. Residue Glu176 is the Proton acceptor of the active site. Substrate is bound by residues Gly182, Ser221, and 242–243 (GG).

It belongs to the triosephosphate isomerase family. As to quaternary structure, homodimer.

It is found in the cytoplasm. The enzyme catalyses D-glyceraldehyde 3-phosphate = dihydroxyacetone phosphate. It functions in the pathway carbohydrate biosynthesis; gluconeogenesis. The protein operates within carbohydrate degradation; glycolysis; D-glyceraldehyde 3-phosphate from glycerone phosphate: step 1/1. Involved in the gluconeogenesis. Catalyzes stereospecifically the conversion of dihydroxyacetone phosphate (DHAP) to D-glyceraldehyde-3-phosphate (G3P). This Haemophilus influenzae (strain ATCC 51907 / DSM 11121 / KW20 / Rd) protein is Triosephosphate isomerase.